Here is a 1305-residue protein sequence, read N- to C-terminus: Contactin-associated protein-like 5 (1305 aa).

The signal sequence occupies residues Met-1–Thr-22. Residues Ala-23–Cys-174 enclose the F5/8 type C domain. The Extracellular segment spans residues Ala-23–Ser-1236. Laminin G-like domains are found at residues Ile-180 to Cys-360 and Pro-367 to Cys-544. 5 disulfide bridges follow: Cys-329–Cys-360, Cys-512–Cys-544, Cys-550–Cys-561, Cys-555–Cys-570, and Cys-572–Cys-582. Positions Ile-546–His-583 constitute an EGF-like 1 domain. The Fibrinogen C-terminal domain maps to Asn-584–Trp-790. The region spanning Asn-791–Cys-956 is the Laminin G-like 3 domain. 5 disulfide bridges follow: Cys-929–Cys-956, Cys-960–Cys-973, Cys-967–Cys-982, Cys-984–Cys-994, and Cys-1163–Cys-1198. The 39-residue stretch at Pro-957 to Lys-995 folds into the EGF-like 2 domain. The 182-residue stretch at Pro-1017–Cys-1198 folds into the Laminin G-like 4 domain. A helical transmembrane segment spans residues Ala-1237–Met-1257. The Cytoplasmic segment spans residues Ser-1258–Ile-1305.

This sequence belongs to the neurexin family. In terms of tissue distribution, expressed in brain.

It is found in the membrane. In terms of biological role, may play a role in the correct development and proper functioning of the peripheral and central nervous system and be involved in cell adhesion and intercellular communication. This Gallus gallus (Chicken) protein is Contactin-associated protein-like 5 (CNTNAP5).